Consider the following 93-residue polypeptide: uncharacterized protein (93 aa).

The chain crosses the membrane as a helical span at residues 12–32 (VVGGLSFWTFSAGLIMIVNAL). The disordered stretch occupies residues 47-66 (TANANGSDDDNENKNNSYRS).

It is found in the cell membrane. This is an uncharacterized protein from Mycoplasma genitalium (strain ATCC 33530 / DSM 19775 / NCTC 10195 / G37) (Mycoplasmoides genitalium).